The chain runs to 245 residues: 4-hydroxy-tetrahydrodipicolinate reductase (245 aa).

NAD(+) contacts are provided by residues 7 to 12 (GAKGKV), 75 to 77 (GTT), and 102 to 105 (APNF). His132 acts as the Proton donor/acceptor in catalysis. His133 provides a ligand contact to (S)-2,3,4,5-tetrahydrodipicolinate. Lys136 serves as the catalytic Proton donor. A (S)-2,3,4,5-tetrahydrodipicolinate-binding site is contributed by 142–143 (GT).

The protein belongs to the DapB family.

It localises to the cytoplasm. It catalyses the reaction (S)-2,3,4,5-tetrahydrodipicolinate + NAD(+) + H2O = (2S,4S)-4-hydroxy-2,3,4,5-tetrahydrodipicolinate + NADH + H(+). The catalysed reaction is (S)-2,3,4,5-tetrahydrodipicolinate + NADP(+) + H2O = (2S,4S)-4-hydroxy-2,3,4,5-tetrahydrodipicolinate + NADPH + H(+). It participates in amino-acid biosynthesis; L-lysine biosynthesis via DAP pathway; (S)-tetrahydrodipicolinate from L-aspartate: step 4/4. In terms of biological role, catalyzes the conversion of 4-hydroxy-tetrahydrodipicolinate (HTPA) to tetrahydrodipicolinate. This is 4-hydroxy-tetrahydrodipicolinate reductase from Mycolicibacterium gilvum (strain PYR-GCK) (Mycobacterium gilvum (strain PYR-GCK)).